A 433-amino-acid polypeptide reads, in one-letter code: Serendipity locus protein delta (433 aa).

The ZAD domain maps to 1-90; that stretch reads MDTCFFCGAV…TQKRLTTQLK (90 aa). Zn(2+) contacts are provided by Cys-4, Cys-7, Cys-61, and Cys-64. Residues 141–162 are disordered; it reads DTEIKREFVDEEEEEDDDDDDE. A compositionally biased stretch (acidic residues) spans 149 to 162; sequence VDEEEEEDDDDDDE. The short motif at 187 to 193 is the Nuclear localization signal element; the sequence is PTKKRVK. C2H2-type zinc fingers lie at residues 194–217, 223–245, 251–273, 279–301, 308–330, 337–359, and 405–428; these read QECTTCGKVYNSWYQLQKHISEEH, HICPICGVIRRDEEYLELHMNLH, KQCRYCPKSFSRPVNTLRHMRMH, YQCEKCGLRFSQDNLLYNHRLRH, IICSICNVSFKSRKTFNHHTLIH, HYCSVCPKSFTERYTLKMHMKTH, and GFCLICNTNFENKKELEHHLQFDH.

Homodimer (via ZAD domain) in solution. Binds DNA as a homodimer. N-terminal regions of the protein are required, in addition to the zinc fingers, for the specificity of chromatin-binding. In terms of tissue distribution, predominantly localized to the sub- and supraesophagal ganglia and the ventral nerve cord in the embryo, after dorsal closure.

It is found in the nucleus. Functionally, transcriptional activator that controls bicoid gene expression during oogenesis. Found in transcriptionally active cells. Binds to specific sites on polytene chromosomes of third instar larvae. Binds to the consensus DNA sequence 5'-YTAGAGATGGRAA-3'. This Drosophila melanogaster (Fruit fly) protein is Serendipity locus protein delta (Sry-delta).